The chain runs to 187 residues: Adenylate kinase (187 aa).

An ATP-binding site is contributed by 10 to 15; the sequence is GSGKGT. An NMP region spans residues 30 to 59; it reads STGDLLRAEVAAGSPLGLKAKEVMARGDLV. AMP contacts are provided by residues Thr31, Arg36, 57–59, 85–88, and Gln92; these read DLV and GYPR. Residues 126–136 are LID; it reads GRAKAEGREDD. Residue Arg127 participates in ATP binding. The AMP site is built by Arg133 and Arg144. Gly172 contacts ATP.

This sequence belongs to the adenylate kinase family. Monomer.

Its subcellular location is the cytoplasm. The catalysed reaction is AMP + ATP = 2 ADP. The protein operates within purine metabolism; AMP biosynthesis via salvage pathway; AMP from ADP: step 1/1. Catalyzes the reversible transfer of the terminal phosphate group between ATP and AMP. Plays an important role in cellular energy homeostasis and in adenine nucleotide metabolism. The protein is Adenylate kinase of Xanthomonas campestris pv. campestris (strain 8004).